The chain runs to 526 residues: Light-independent protochlorophyllide reductase subunit B (526 aa).

Asp-36 contacts [4Fe-4S] cluster. Asp-284 serves as the catalytic Proton donor. 419 to 420 contacts substrate; sequence GL.

Belongs to the ChlB/BchB/BchZ family. Protochlorophyllide reductase is composed of three subunits; BchL, BchN and BchB. Forms a heterotetramer of two BchB and two BchN subunits. [4Fe-4S] cluster is required as a cofactor.

The enzyme catalyses chlorophyllide a + oxidized 2[4Fe-4S]-[ferredoxin] + 2 ADP + 2 phosphate = protochlorophyllide a + reduced 2[4Fe-4S]-[ferredoxin] + 2 ATP + 2 H2O. It functions in the pathway porphyrin-containing compound metabolism; bacteriochlorophyll biosynthesis (light-independent). Component of the dark-operative protochlorophyllide reductase (DPOR) that uses Mg-ATP and reduced ferredoxin to reduce ring D of protochlorophyllide (Pchlide) to form chlorophyllide a (Chlide). This reaction is light-independent. The NB-protein (BchN-BchB) is the catalytic component of the complex. In Halorhodospira halophila (strain DSM 244 / SL1) (Ectothiorhodospira halophila (strain DSM 244 / SL1)), this protein is Light-independent protochlorophyllide reductase subunit B.